The chain runs to 250 residues: Triosephosphate isomerase (250 aa).

9–11 lines the substrate pocket; the sequence is NWK. Histidine 96 acts as the Electrophile in catalysis. The active-site Proton acceptor is the glutamate 168. Substrate contacts are provided by residues glycine 174, serine 216, and 237–238; that span reads GG.

Belongs to the triosephosphate isomerase family. As to quaternary structure, homodimer.

The protein resides in the cytoplasm. The catalysed reaction is D-glyceraldehyde 3-phosphate = dihydroxyacetone phosphate. It participates in carbohydrate biosynthesis; gluconeogenesis. The protein operates within carbohydrate degradation; glycolysis; D-glyceraldehyde 3-phosphate from glycerone phosphate: step 1/1. In terms of biological role, involved in the gluconeogenesis. Catalyzes stereospecifically the conversion of dihydroxyacetone phosphate (DHAP) to D-glyceraldehyde-3-phosphate (G3P). In Leptospira interrogans serogroup Icterohaemorrhagiae serovar Lai (strain 56601), this protein is Triosephosphate isomerase.